The primary structure comprises 318 residues: tRNA-modifying protein YgfZ (318 aa).

Folate-binding residues include tryptophan 24 and tryptophan 185.

The protein belongs to the tRNA-modifying YgfZ family.

It localises to the cytoplasm. Functionally, folate-binding protein involved in regulating the level of ATP-DnaA and in the modification of some tRNAs. It is probably a key factor in regulatory networks that act via tRNA modification, such as initiation of chromosomal replication. The protein is tRNA-modifying protein YgfZ of Buchnera aphidicola subsp. Baizongia pistaciae (strain Bp).